A 313-amino-acid polypeptide reads, in one-letter code: LKENPNMCAYKAPSLDAREDMMIREVPRVGKEAATKAIKEWGQPMSKITHLIFCTTSGVALPGVDYELIVLLGLDPSVKRYMMYHQGCFAGGTVLRLAKDLAENNKDARVLIVCSENTAVTFRGPSETDMDSLVGQALFADGAAAIIIGSDPVPEVENPLFEIVSTDQKLVPNSHGAIGGLLREVGLTFYLNKSVPDIISQNINDALSKAFDPLGISDYNSIFWIAHPGGPAILDQVEQKVNLKPEKMNATRDVLSNYGNMSSACVFFIMDLMRKKSLEEGLKTTGEGLDWGVLFGFGPGLTIETVVLRSVAI.

Cys88 is a catalytic residue. Substrate contacts are provided by residues Leu191 and 229 to 231 (GGP).

Belongs to the thiolase-like superfamily. Chalcone/stilbene synthases family. As to quaternary structure, homodimer.

Its subcellular location is the cytoplasm. The catalysed reaction is 4-coumaroyl-CoA + 3 malonyl-CoA + 3 H(+) = trans-resveratrol + 4 CO2 + 4 CoA. It participates in phytoalexin biosynthesis; 3,4',5-trihydroxystilbene biosynthesis; 3,4',5-trihydroxystilbene from trans-4-coumarate: step 2/2. The chain is Putative stilbene synthase 2 from Arachis hypogaea (Peanut).